A 1241-amino-acid polypeptide reads, in one-letter code: MIENWPKKPEGSQWTDDQWKAVVANGRDILVAAAAGSGKTAVLVERIIKKIINEENPVDVDRLLVVTFTNAAAQEMKNRIGEALEKVLIDEPGSQHVRKQLSLLNKASISTIHSFCLQVIRGYYYMLDVDPRFRIANQTENELLKEEVLDDILEEEYGIEDNTIFFELVDRYTSDRSDDDLQRMILALHTESRAHPNPEKWLDKLVEAYDVEGKTIEDLVYASYLLEDVKFQLETAEQHIRKATELAMLPDGPAPRIETLQADLALLGTLSSAARESWTSVYEAMQNVSWQTLKRIKKSDYNEDIVKQVDSLRNKAKDEVKKLQEELFSRRPESFLRDFQDMHPVLEKLVQLVKVFTERFQAMKRDKGMVDFTDLEHFCLQILSEQSEDGEMKPSAVALQYRNKFAEVLVDEYQDTNFVQESIIKFVTKDSESEGNLFMVGDVKQSIYRFRLAEPGLFLGKYKRFTQEGLGGGMKIDLAKNFRSRHEVLAGTNFIFKQIMGEEVGEIDYDADAELKLGASYPEGEDVAAELLCIQQTEEEVIDGEEGAEVEKAQLEARLMAQRIKAMVDSGYEVYDRKTDSMRPVQYRDFVILLRSMPWAPQIMEELKLQGIPVYADLATGYFEATEVNIMMNVFRVIDNPMQDIPLAAVLRSPIVGLNDEELATLRAHGKKGSFYEVMSSFLKGAPLEEEKELHDKLEWFYNLLQGWREFARQQSLSDLIWKVYGETGYYDFVGGLPAGKQRQANLRVLYDRARQYEATSFRGLFRFLRFIERILERGDDMGTARALGEQEDVVRIMTIHKSKGLEFPVVFVAGLGRRFNTQDLMKRFLLHKDFGFGSQFIDPRKRIKYTTLSQLAIKRKMKMELIAEEMRVLYVALTRAKEKLILIGTVKDATKEMEKWLDAREHSEWLLPDHVRAGASCYLDWIAPSLYRHRDSEMLLELGQGSIPDEIYGYDTSWKVEVVDGNTLLAPEPVQEEKQELLEALREKKAVPLQSERKDEVYDRLMWKYGYEEATSHRAKQSVTEIKRNYQSEEGSDNAFIKKLRAPIKTRPRFMEKKGLTYAERGTAVHAVMQHVDLKKPITVEVLQEQIAGMVNKELLTFEQAEEIAVEKVISFFDSDLGKRVLAAKSVEREVPFTMMLAAEEAYQDWQGESGESILVQGVIDCMIEEEDGITLIDFKTDTIEGKFPGGFEQAKPILETRYKVQLSLYAKALEKSLQHPVKEKCLYFFDGNHVIKVEE.

One can recognise a UvrD-like helicase ATP-binding domain in the interval Ser12–Arg485. ATP is bound at residue Ala33–Thr40. Residues Gly505 to Gly805 enclose the UvrD-like helicase C-terminal domain.

Belongs to the helicase family. AddA subfamily. In terms of assembly, heterodimer of AddA and AddB/RexB. It depends on Mg(2+) as a cofactor.

It carries out the reaction Couples ATP hydrolysis with the unwinding of duplex DNA by translocating in the 3'-5' direction.. The catalysed reaction is ATP + H2O = ADP + phosphate + H(+). Functionally, the heterodimer acts as both an ATP-dependent DNA helicase and an ATP-dependent, dual-direction single-stranded exonuclease. Recognizes the chi site generating a DNA molecule suitable for the initiation of homologous recombination. The AddA nuclease domain is required for chi fragment generation; this subunit has the helicase and 3' -&gt; 5' nuclease activities. The polypeptide is ATP-dependent helicase/nuclease subunit A (Bacillus thuringiensis (strain Al Hakam)).